Reading from the N-terminus, the 505-residue chain is TBC1 domain family member 22B (505 aa).

A2 carries the post-translational modification N-acetylalanine. S58 and S116 each carry phosphoserine. The segment at S105–R146 is disordered. Residues K129–R146 show a composition bias toward polar residues. S154 carries the phosphoserine modification. Residues G210–P434 form the Rab-GAP TBC domain.

Interacts with ACBD3 and ARFGEF1. Interacts with YWHAB, YWHAE, YWHAG, YWHAH, YWHAQ and YWHAZ.

Its function is as follows. May act as a GTPase-activating protein for Rab family protein(s). The polypeptide is TBC1 domain family member 22B (TBC1D22B) (Homo sapiens (Human)).